The following is a 104-amino-acid chain: Flagellar hook-basal body complex protein FliE (104 aa).

It belongs to the FliE family.

It is found in the bacterial flagellum basal body. The chain is Flagellar hook-basal body complex protein FliE from Salmonella newport (strain SL254).